The primary structure comprises 314 residues: GTP cyclohydrolase FolE2 (314 aa).

The tract at residues 290 to 314 is disordered; sequence DASAWSAPQASAPDQQESFATGNER. The segment covering 291 to 305 has biased composition (low complexity); it reads ASAWSAPQASAPDQQ.

It belongs to the GTP cyclohydrolase IV family.

It carries out the reaction GTP + H2O = 7,8-dihydroneopterin 3'-triphosphate + formate + H(+). Its pathway is cofactor biosynthesis; 7,8-dihydroneopterin triphosphate biosynthesis; 7,8-dihydroneopterin triphosphate from GTP: step 1/1. Its function is as follows. Converts GTP to 7,8-dihydroneopterin triphosphate. The sequence is that of GTP cyclohydrolase FolE2 from Pseudomonas putida (strain ATCC 700007 / DSM 6899 / JCM 31910 / BCRC 17059 / LMG 24140 / F1).